A 123-amino-acid chain; its full sequence is MPTIQQLIRKPRQPKVKRSKSMHLEQCPQKRGVCTRVYTTTPKKPNSAMRKVAKVRLTNGFEVISYIPGESHNLQEHSVVLIRGGRVKDLPGVRYHILRGVLDTQGVKDRKQRRSKYGAKRPK.

The interval 1–28 (MPTIQQLIRKPRQPKVKRSKSMHLEQCP) is disordered. A compositionally biased stretch (basic residues) spans 9-21 (RKPRQPKVKRSKS). Asp-89 is modified (3-methylthioaspartic acid).

It belongs to the universal ribosomal protein uS12 family. As to quaternary structure, part of the 30S ribosomal subunit. Contacts proteins S8 and S17. May interact with IF1 in the 30S initiation complex.

With S4 and S5 plays an important role in translational accuracy. In terms of biological role, interacts with and stabilizes bases of the 16S rRNA that are involved in tRNA selection in the A site and with the mRNA backbone. Located at the interface of the 30S and 50S subunits, it traverses the body of the 30S subunit contacting proteins on the other side and probably holding the rRNA structure together. The combined cluster of proteins S8, S12 and S17 appears to hold together the shoulder and platform of the 30S subunit. The sequence is that of Small ribosomal subunit protein uS12 from Ruegeria sp. (strain TM1040) (Silicibacter sp.).